Consider the following 132-residue polypeptide: Small ribosomal subunit protein uS8 (132 aa).

Belongs to the universal ribosomal protein uS8 family. In terms of assembly, part of the 30S ribosomal subunit. Contacts proteins S5 and S12.

Its function is as follows. One of the primary rRNA binding proteins, it binds directly to 16S rRNA central domain where it helps coordinate assembly of the platform of the 30S subunit. In Bacillus cytotoxicus (strain DSM 22905 / CIP 110041 / 391-98 / NVH 391-98), this protein is Small ribosomal subunit protein uS8.